A 1828-amino-acid polypeptide reads, in one-letter code: Chromodomain-helicase-DNA-binding protein 2 (1828 aa).

Residues 1–14 (MMRNKDKSQEEDSS) show a composition bias toward basic and acidic residues. Residues 1-243 (MMRNKDKSQE…EDDDFETDSD (243 aa)) form a disordered region. The segment covering 15–75 (LHSNASSHSA…SESESAGSKS (61 aa)) has biased composition (low complexity). Composition is skewed to basic and acidic residues over residues 81–101 (EAKEKPASKKERIADVKKMWE), 115–128 (SRQEPSRFNIKEEA), and 146–155 (KKQEKWKQEP). The segment covering 175 to 204 (VKARRPVPRRTVPKPRVKKQPKTQRGKRKK) has biased composition (basic residues). Ser207 and Ser208 each carry phosphoserine. Residues 234-243 (EDDDFETDSD) are compositionally biased toward acidic residues. Thr240 is modified (phosphothreonine). Ser242 bears the Phosphoserine mark. Chromo domains lie at 261-353 (ETIE…QWLG) and 378-456 (QIVE…IPTR). The Helicase ATP-binding domain occupies 496 to 666 (AHSWCKNNSV…WSLLHFIMPE (171 aa)). 509-516 (DEMGLGKT) is an ATP binding site. Residues 617 to 620 (DEAH) carry the DEAH box motif. One can recognise a Helicase C-terminal domain in the interval 795–946 (LLDKLLTRLR…HLVIQRMDTT (152 aa)). 4 disordered regions span residues 1030–1124 (EDEE…RSVR), 1331–1462 (VTGG…DEDD), 1556–1638 (HKKR…ADRG), and 1680–1828 (HMDA…VRKT). A compositionally biased stretch (basic and acidic residues) spans 1037 to 1065 (ERPHKDWDEIIPEEQRKKVEEEERQKELE). A phosphoserine mark is found at Ser1085, Ser1087, Ser1365, and Ser1386. Positions 1347–1371 (KKENKVPRLKEEHGIELSSPRHSDN) are enriched in basic and acidic residues. 2 stretches are compositionally biased toward basic and acidic residues: residues 1396–1431 (ENKENKEKQMSSRKDKEGDKERKKSKDKKEKPKSGD) and 1565–1574 (EQKKKDDVTG). The tract at residues 1464 to 1566 (LDQETFSICK…KKRSQEEEEQ (103 aa)) is CHD1 helical C-terminal domain (CHCT). Polar residues predominate over residues 1584 to 1601 (SGSSRDSLISQSHTSHNL). Composition is skewed to basic and acidic residues over residues 1698 to 1720 (RPYDQYSSDRDHRGHRDYYDRHH), 1739 to 1749 (QDFRRMSDHRP), 1760 to 1772 (DHYRSFHTDKLGE), and 1795 to 1814 (SPHDSKSPLDHRSPLERSLE). At Ser1807 the chain carries Phosphoserine.

The protein belongs to the SNF2/RAD54 helicase family. Interacts with MYOD1. Interacts with histone H3.3.

The protein localises to the nucleus. It catalyses the reaction ATP + H2O = ADP + phosphate + H(+). Functionally, ATP-dependent chromatin-remodeling factor that specifically binds to the promoter of target genes, leading to chromatin remodeling, possibly by promoting deposition of histone H3.3. Involved in myogenesis via interaction with MYOD1: binds to myogenic gene regulatory sequences and mediates incorporation of histone H3.3 prior to the onset of myogenic gene expression, promoting their expression. This chain is Chromodomain-helicase-DNA-binding protein 2 (CHD2), found in Homo sapiens (Human).